Reading from the N-terminus, the 23-residue chain is Clavanin-B (23 aa).

A Phenylalanine amide modification is found at F23.

The protein resides in the secreted. Has antimicrobial activity. The polypeptide is Clavanin-B (Styela clava (Sea squirt)).